The sequence spans 158 residues: Cyclic pyranopterin monophosphate synthase (158 aa).

Substrate-binding positions include 74–76 (MCH) and 112–113 (ME). Residue D127 is part of the active site.

The protein belongs to the MoaC family. In terms of assembly, homohexamer; trimer of dimers.

The enzyme catalyses (8S)-3',8-cyclo-7,8-dihydroguanosine 5'-triphosphate = cyclic pyranopterin phosphate + diphosphate. It participates in cofactor biosynthesis; molybdopterin biosynthesis. Catalyzes the conversion of (8S)-3',8-cyclo-7,8-dihydroguanosine 5'-triphosphate to cyclic pyranopterin monophosphate (cPMP). The protein is Cyclic pyranopterin monophosphate synthase of Thermoanaerobacter sp. (strain X514).